Consider the following 217-residue polypeptide: Putative thymidylate synthase (217 aa).

Residue Cys139 is part of the active site.

It belongs to the thymidylate synthase family. Archaeal-type ThyA subfamily. In terms of assembly, monomer.

It localises to the cytoplasm. The protein operates within pyrimidine metabolism; dTTP biosynthesis. Its function is as follows. May catalyze the biosynthesis of dTMP using an unknown cosubstrate. The chain is Putative thymidylate synthase from Methanosarcina barkeri (strain Fusaro / DSM 804).